A 404-amino-acid polypeptide reads, in one-letter code: Argininosuccinate synthase (404 aa).

ATP is bound by residues 10–18 and Ala38; that span reads AYSGGVDTS. Tyr89 is a binding site for L-citrulline. Gly119 contacts ATP. L-aspartate-binding residues include Thr121, Asn125, and Asp126. Asn125 is an L-citrulline binding site. 5 residues coordinate L-citrulline: Arg129, Ser177, Ser186, Glu262, and Tyr274.

This sequence belongs to the argininosuccinate synthase family. Type 1 subfamily. As to quaternary structure, homotetramer.

Its subcellular location is the cytoplasm. The catalysed reaction is L-citrulline + L-aspartate + ATP = 2-(N(omega)-L-arginino)succinate + AMP + diphosphate + H(+). It participates in amino-acid biosynthesis; L-arginine biosynthesis; L-arginine from L-ornithine and carbamoyl phosphate: step 2/3. The polypeptide is Argininosuccinate synthase (Prochlorococcus marinus (strain MIT 9312)).